Consider the following 94-residue polypeptide: Pyrimidine/purine nucleoside phosphorylase (94 aa).

The protein belongs to the nucleoside phosphorylase PpnP family.

It carries out the reaction a purine D-ribonucleoside + phosphate = a purine nucleobase + alpha-D-ribose 1-phosphate. The catalysed reaction is adenosine + phosphate = alpha-D-ribose 1-phosphate + adenine. The enzyme catalyses cytidine + phosphate = cytosine + alpha-D-ribose 1-phosphate. It catalyses the reaction guanosine + phosphate = alpha-D-ribose 1-phosphate + guanine. It carries out the reaction inosine + phosphate = alpha-D-ribose 1-phosphate + hypoxanthine. The catalysed reaction is thymidine + phosphate = 2-deoxy-alpha-D-ribose 1-phosphate + thymine. The enzyme catalyses uridine + phosphate = alpha-D-ribose 1-phosphate + uracil. It catalyses the reaction xanthosine + phosphate = alpha-D-ribose 1-phosphate + xanthine. Its function is as follows. Catalyzes the phosphorolysis of diverse nucleosides, yielding D-ribose 1-phosphate and the respective free bases. Can use uridine, adenosine, guanosine, cytidine, thymidine, inosine and xanthosine as substrates. Also catalyzes the reverse reactions. The polypeptide is Pyrimidine/purine nucleoside phosphorylase (Salmonella typhimurium (strain LT2 / SGSC1412 / ATCC 700720)).